We begin with the raw amino-acid sequence, 219 residues long: Glutathione S-transferase 3 (219 aa).

A GST N-terminal domain is found at 3–82; it reads DEVVLLDTWA…YIDEVWNDKS (80 aa). Glutathione-binding positions include S13, I54, and 66-67; that span reads ES. The GST C-terminal domain occupies 88–216; the sequence is DPYKRSQARF…GLIVELQKTL (129 aa).

Belongs to the GST superfamily. HSP26 family. Homodimer. degradation; (R)-lactate from methylglyoxal: step 1/2.

It catalyses the reaction RX + glutathione = an S-substituted glutathione + a halide anion + H(+). Functionally, conjugation of reduced glutathione to a wide number of exogenous and endogenous hydrophobic electrophiles. Involved in the detoxification of certain herbicides. The chain is Glutathione S-transferase 3 (GST3) from Glycine max (Soybean).